The sequence spans 549 residues: MDVVEVAGSWWAQEREDIIMKYEKGHRAGLPEDKGPKPFRSYNNNVDHLGIVHETELPPLTAREAKQIRREISRKSKWVDMLGDWEKYKSSRKLIDRAYKGMPMNIRGPMWSVLLNTEEMKMKNPGRYQIMKEKGKRSSEHIQRIDRDVSGTLRKHIFFRDRYGTKQRELLHILLAYEEYNPEVGYCRDLSHIAALFLLYLPEEDAFWALVQLLASERHSLQGFHSPNGGTVQGLQDQQEHVVATSQPKTMGHQDKKDLCGQCSPLGCLIRILIDGISLGLTLRLWDVYLVEGEQALMPITRIAFKVQQKRLTKTSRCGPWARFCNRFVDTWARDEDTVLKHLRASMKKLTRKQGDLPPPAKPEQGSSASRPVPASRGGKTLCKGDRQAPPGPPARFPRPIWSASPPRAPRSSTPCPGGAVREDTYPVGTQGVPSPALAQGGPQGSWRFLQWNSMPRLPTDLDVEGPWFRHYDFRQSCWVRAISQEDQLAPCWQAEHPAERVRSAFAAPSTDSDQGTPFRARDEQQCAPTSGPCLCGLHLESSQFPPGF.

The region spanning 101–293 (GMPMNIRGPM…RLWDVYLVEG (193 aa)) is the Rab-GAP TBC domain. Residues C318 and C325 are each lipidated (S-palmitoyl cysteine). 2 disordered regions span residues 350-443 (LTRK…QGGP) and 507-526 (AAPSTDSDQGTPFRARDEQQ). Positions 398 to 417 (PRPIWSASPPRAPRSSTPCP) are enriched in low complexity.

Post-translationally, ubiquitinated by a CUL7-based E3 ligase, which leads to proteasomal degradation. In terms of processing, palmitoylation is required for membrane localization and protects TBC1D3 from ubiquitination.

It is found in the cell membrane. Functionally, acts as a GTPase activating protein for RAB5. Does not act on RAB4 or RAB11. The polypeptide is TBC1 domain family member 3I (Homo sapiens (Human)).